The chain runs to 427 residues: Probable transcription factor At5g28040 (427 aa).

Residues 1–81 (MASDQRDTDF…APATKSSSGT (81 aa)) are disordered. The residue at position 14 (Ser-14) is a Phosphoserine. The span at 22–32 (GGGGGGRGGGE) shows a compositional bias: gly residues. Acidic residues predominate over residues 33–62 (TESDEDVVIPEPNEAEDDDHDPDPDPEYED).

It belongs to the GeBP family.

This is Probable transcription factor At5g28040 from Arabidopsis thaliana (Mouse-ear cress).